The chain runs to 100 residues: Guanine nucleotide exchange factor MSS4 homolog (100 aa).

The MSS4 domain maps to 1–100 (MSNLRIVCQH…YLLLCSLEKN (100 aa)). Residues Cys8, Cys11, Cys73, and Cys76 each contribute to the Zn(2+) site.

The protein belongs to the DSS4/MSS4 family.

Guanine-nucleotide-releasing protein that acts on members of the sec4/ypt1/rab subfamily. The polypeptide is Guanine nucleotide exchange factor MSS4 homolog (Schizosaccharomyces pombe (strain 972 / ATCC 24843) (Fission yeast)).